The chain runs to 102 residues: NADH-quinone oxidoreductase subunit K (102 aa).

The next 3 helical transmembrane spans lie at 3-23 (IGLT…AFGI), 31-51 (IVLL…LVAF), and 66-86 (FILT…VVYF).

This sequence belongs to the complex I subunit 4L family. In terms of assembly, NDH-1 is composed of 14 different subunits. Subunits NuoA, H, J, K, L, M, N constitute the membrane sector of the complex.

It localises to the cell inner membrane. It catalyses the reaction a quinone + NADH + 5 H(+)(in) = a quinol + NAD(+) + 4 H(+)(out). Its function is as follows. NDH-1 shuttles electrons from NADH, via FMN and iron-sulfur (Fe-S) centers, to quinones in the respiratory chain. The immediate electron acceptor for the enzyme in this species is believed to be ubiquinone. Couples the redox reaction to proton translocation (for every two electrons transferred, four hydrogen ions are translocated across the cytoplasmic membrane), and thus conserves the redox energy in a proton gradient. The sequence is that of NADH-quinone oxidoreductase subunit K from Rhodospirillum centenum (strain ATCC 51521 / SW).